We begin with the raw amino-acid sequence, 366 residues long: NADH-quinone oxidoreductase subunit D (366 aa).

It belongs to the complex I 49 kDa subunit family. NDH-1 is composed of 14 different subunits. Subunits NuoB, C, D, E, F, and G constitute the peripheral sector of the complex.

The protein localises to the cell membrane. It carries out the reaction a quinone + NADH + 5 H(+)(in) = a quinol + NAD(+) + 4 H(+)(out). NDH-1 shuttles electrons from NADH, via FMN and iron-sulfur (Fe-S) centers, to quinones in the respiratory chain. The immediate electron acceptor for the enzyme in this species is believed to be a menaquinone. Couples the redox reaction to proton translocation (for every two electrons transferred, four hydrogen ions are translocated across the cytoplasmic membrane), and thus conserves the redox energy in a proton gradient. The chain is NADH-quinone oxidoreductase subunit D from Bacillus anthracis.